Consider the following 210-residue polypeptide: DNA-directed RNA polymerases I, II, and III subunit RPABC1 (210 aa).

N-acetylmethionine is present on Met-1. A Glycyl lysine isopeptide (Lys-Gly) (interchain with G-Cter in SUMO2) cross-link involves residue Lys-81.

Belongs to the archaeal Rpo5/eukaryotic RPB5 RNA polymerase subunit family. In terms of assembly, component of the RNA polymerase I (Pol I), RNA polymerase II (Pol II) and RNA polymerase III (Pol III) complexes consisting of at least 13, 12 and 17 subunits, respectively. Pol I complex consists of a ten-subunit catalytic core composed of POLR1A/RPA1, POLR1B/RPA2, POLR1C/RPAC1, POLR1D/RPAC2, POLR1H/RPA12, POLR2E/RPABC1, POLR2F/RPABC2, POLR2H/RPABC3, POLR2K/RPABC4 and POLR2L/RPABC5; a mobile stalk subunit POLR1F/RPA43 protruding from the core and additional subunits homologous to general transcription factors POLR1E/RPA49 and POLR1G/RPA34. Part of Pol I pre-initiation complex (PIC), in which Pol I core assembles with RRN3 and promoter-bound UTBF and SL1/TIF-IB complex. Pol II complex contains a ten-subunit catalytic core composed of POLR2A/RPB1, POLR2B/RPB2, POLR2C/RPB3, POLR2I/RPB9, POLR2J/RPB11, POLR2E/RPABC1, POLR2F/RPABC2, POLR2H/RPABC3, POLR2K/RPABC4 and POLR2L/RPABC5 and a mobile stalk composed of two subunits POLR2D/RPB4 and POLR2G/RPB7. Part of Pol II(G) complex, in which Pol II core associates with an additional subunit POLR2M; unlike conventional Pol II, Pol II(G) functions as a transcriptional repressor. Part of TBP-based Pol II pre-initiation complex (PIC), in which Pol II core assembles with general transcription factors and other specific initiation factors including GTF2E1, GTF2E2, GTF2F1, GTF2F2, TCEA1, ERCC2, ERCC3, GTF2H2, GTF2H3, GTF2H4, GTF2H5, GTF2A1, GTF2A2, GTF2B and TBP; this large multi-subunit PIC complex mediates DNA unwinding and targets Pol II core to the transcription start site where the first phosphodiester bond forms. In Pol II complex, this subunit is present in 2-fold molar excess over the other subunits. Pol III complex consists of a ten-subunit catalytic core composed of POLR3A/RPC1, POLR3B/RPC2, POLR1C/RPAC1, POLR1D/RPAC2, POLR3K/RPC10, POLR2E/RPABC1, POLR2F/RPABC2, POLR2H/RPABC3, POLR2K/RPABC4 and POLR2L/RPABC5; a mobile stalk composed of two subunits POLR3H/RPC8 and CRCP/RPC9, protruding from the core and functioning primarily in transcription initiation; and additional subunits homologous to general transcription factors of the RNA polymerase II machinery, POLR3C/RPC3-POLR3F/RPC6-POLR3G/RPC7 heterotrimer required for transcription initiation and POLR3D/RPC4-POLR3E/RPC5 heterodimer involved in both transcription initiation and termination. Component of the PAQosome complex which is responsible for the biogenesis of several protein complexes and which consists of R2TP complex members RUVBL1, RUVBL2, RPAP3 and PIH1D1, URI complex members PFDN2, PFDN6, PDRG1, UXT and URI1 as well as ASDURF, POLR2E and DNAAF10/WDR92. Interacts with URI1.

The protein resides in the nucleus. It is found in the nucleolus. In terms of biological role, DNA-dependent RNA polymerase catalyzes the transcription of DNA into RNA using the four ribonucleoside triphosphates as substrates. Common component of RNA polymerases I, II and III which synthesize ribosomal RNA precursors, mRNA precursors and many functional non-coding RNAs, and small RNAs, such as 5S rRNA and tRNAs, respectively. Pol II is the central component of the basal RNA polymerase II transcription machinery. Pols are composed of mobile elements that move relative to each other. In Pol II, POLR2E/RPABC1 is part of the lower jaw surrounding the central large cleft and thought to grab the incoming DNA template. Seems to be the major component in this process. The protein is DNA-directed RNA polymerases I, II, and III subunit RPABC1 of Mus musculus (Mouse).